A 491-amino-acid polypeptide reads, in one-letter code: Probable cobyric acid synthase (491 aa).

The region spanning 252-444 is the GATase cobBQ-type domain; the sequence is PVEVNIVKFS…LHGILENFEF (193 aa). Residue C330 is the Nucleophile of the active site. Residue H436 is part of the active site.

The protein belongs to the CobB/CobQ family. CobQ subfamily.

It functions in the pathway cofactor biosynthesis; adenosylcobalamin biosynthesis. Its function is as follows. Catalyzes amidations at positions B, D, E, and G on adenosylcobyrinic A,C-diamide. NH(2) groups are provided by glutamine, and one molecule of ATP is hydrogenolyzed for each amidation. This Methanococcus vannielii (strain ATCC 35089 / DSM 1224 / JCM 13029 / OCM 148 / SB) protein is Probable cobyric acid synthase.